Reading from the N-terminus, the 189-residue chain is Small ribosomal subunit protein uS7 (189 aa).

This sequence belongs to the universal ribosomal protein uS7 family. As to quaternary structure, part of the 30S ribosomal subunit.

Functionally, one of the primary rRNA binding proteins, it binds directly to 16S rRNA where it nucleates assembly of the head domain of the 30S subunit. Is located at the subunit interface close to the decoding center. The polypeptide is Small ribosomal subunit protein uS7 (Methanosarcina acetivorans (strain ATCC 35395 / DSM 2834 / JCM 12185 / C2A)).